The sequence spans 569 residues: MTLSDEDKITIEKFALQNAVKYGKAPQLGAVMGKVMGLCPHLRPLSKEVGPVIQHVLDEVMKEVPEEWQARLEVIAPELIEELNTKKEPDKGLKPLDVKEGESVVMRFAPNPNGPPTLGSTRGIVVNSEYVKRYGGKFIIRFDDTDPQTKRPMLEAYDWYLEDCEWLDAKPDEVVIASDNMEVYYDYARQLLEMGHAYVCFCEGGDFKKFKDAKEPCPHRGHAPEVNLEHWDKMLAGEYEEKAAVVRIKTDIEHKDPAMRDFGAFRIVKTAHPRPEVDDKYVVWPLLDFEGAIEDHVLGMTHIIRGKDLMDSEKRQGYIYNYLGWEYPKTTHWGRVKMHEFGKFSTSGLRQSIEDGEYSGWDDPRLPTLRALRRRGIKPEAIRKFMIDMGVGETDVSLSMDTLYAENRKIIDTIANRYFFVWDPVELEVEDAVCCTVNPSLHPSEDRGVRCIDIGSKLLVCKSDVESAELGDMLRMKYLYNIEITSVSPLKCKCIGDSMEDAKSNKMRIIHWVPEDGIPVKVLAPQGEFIGMGEKQIVDELDNVVQFERFGFCRIDSVDDGVVAYFTHK.

A 'HIGH' region motif is present at residues 110-120 (PNPNGPPTLGS).

Belongs to the class-I aminoacyl-tRNA synthetase family. Glutamate--tRNA ligase type 2 subfamily.

It is found in the cytoplasm. It catalyses the reaction tRNA(Glu) + L-glutamate + ATP = L-glutamyl-tRNA(Glu) + AMP + diphosphate. Its function is as follows. Catalyzes the attachment of glutamate to tRNA(Glu) in a two-step reaction: glutamate is first activated by ATP to form Glu-AMP and then transferred to the acceptor end of tRNA(Glu). This is Glutamate--tRNA ligase from Methanococcoides burtonii (strain DSM 6242 / NBRC 107633 / OCM 468 / ACE-M).